Reading from the N-terminus, the 556-residue chain is Endonuclease/exonuclease/phosphatase family domain-containing protein 1 (556 aa).

The region spanning 39–68 (ERLNINTATEEELMTLPGVTRQVAQNIVEY) is the HhH domain.

The chain is Endonuclease/exonuclease/phosphatase family domain-containing protein 1 (eepd1) from Xenopus laevis (African clawed frog).